The primary structure comprises 126 residues: Large ribosomal subunit protein bL12 (126 aa).

Positions 104-116 (AKKEDAEKAKAQL) are enriched in basic and acidic residues. The interval 104–126 (AKKEDAEKAKAQLEEAGATVELK) is disordered. Low complexity predominate over residues 117–126 (EEAGATVELK).

Belongs to the bacterial ribosomal protein bL12 family. As to quaternary structure, homodimer. Part of the ribosomal stalk of the 50S ribosomal subunit. Forms a multimeric L10(L12)X complex, where L10 forms an elongated spine to which 2 to 4 L12 dimers bind in a sequential fashion. Binds GTP-bound translation factors.

Forms part of the ribosomal stalk which helps the ribosome interact with GTP-bound translation factors. Is thus essential for accurate translation. This Bifidobacterium animalis subsp. lactis (strain AD011) protein is Large ribosomal subunit protein bL12.